Consider the following 145-residue polypeptide: GGYYGYPYGVVGAVHDTPEVAAAKAAHFAAVAAAGGAAAVPLYGGAYVGAHDDGQYHPGLYGDEGQYHSHYDGGYVGYAGGYDDGQYRPGLYGDEGQYHGEGYAGHYAGPIAGVPVIVNGVPADTPAVAAAKAAHFAAHAHAAHY.

This Blaberus craniifer (Death's head cockroach) protein is Cuticle protein 5.